A 359-amino-acid chain; its full sequence is Peptide chain release factor 1 (359 aa).

Glutamine 235 carries the post-translational modification N5-methylglutamine.

Belongs to the prokaryotic/mitochondrial release factor family. In terms of processing, methylated by PrmC. Methylation increases the termination efficiency of RF1.

It localises to the cytoplasm. Its function is as follows. Peptide chain release factor 1 directs the termination of translation in response to the peptide chain termination codons UAG and UAA. The chain is Peptide chain release factor 1 from Polynucleobacter necessarius subsp. necessarius (strain STIR1).